A 30-amino-acid polypeptide reads, in one-letter code: Dermaseptin-J10 (30 aa).

As to expression, expressed by the skin glands.

It is found in the secreted. In terms of biological role, has antimicrobial activity. The sequence is that of Dermaseptin-J10 from Phasmahyla jandaia (Jandaia leaf frog).